Here is a 248-residue protein sequence, read N- to C-terminus: PF03932 family protein CutC (248 aa).

This sequence belongs to the CutC family. Homodimer.

The protein localises to the cytoplasm. This is PF03932 family protein CutC from Escherichia coli O139:H28 (strain E24377A / ETEC).